Reading from the N-terminus, the 1346-residue chain is Zinc finger protein 541 (1346 aa).

Disordered regions lie at residues M1 to N34 and E113 to Q136. A compositionally biased stretch (polar residues) spans F21–T32. 3 C2H2-type zinc fingers span residues L140 to H162, H168 to H190, and F196 to H220. 4 disordered regions span residues A235–H271, V283–A328, S437–L472, and S578–R744. Low complexity-rich tracts occupy residues P294–P323 and P440–E458. Residues P671–G685 show a composition bias toward polar residues. The segment at F838–H860 adopts a C2H2-type 4 zinc-finger fold. A disordered region spans residues A931–Q971. Basic and acidic residues predominate over residues Q934 to Q948. The ELM2 domain occupies P1053 to G1145. Residues T1160 to K1211 enclose the SANT domain. Positions V1224 to G1281 are disordered. A compositionally biased stretch (basic and acidic residues) spans T1234–S1247. Positions H1248–S1258 are enriched in basic residues. Positions I1264 to S1273 are enriched in polar residues. A C2H2-type 5 zinc finger spans residues F1289–H1311.

As to quaternary structure, interacts with DNTTIP1. Identified in a complex with KCDT19, HDAC1 and HSPA2. Component of a histone deacetylase complex containing DNTTIP1, ZNF541, HDAC1 and HDAC2. Identified in a complex with HDAC1, HDAC2, DNTTIP1 and KCTD19.

The protein localises to the nucleus. Its function is as follows. Transcription regulator which is essential for male fertility and for the completion of meiotic prophase in spermatocytes. Regulates progression of the pachytene stage of meiotic prophase by activating the expression of genes involved in meiosis during spermatogenesis. Maintains the repression of pre-pachytene transcriptional programs, including meiotic double-strand breaks (DSB) formation genes in pachytene spermatocytes and suppresses aberrant DSB formation after mid-pachytene, thus ensuring meiosis progression. This Homo sapiens (Human) protein is Zinc finger protein 541 (ZNF541).